A 192-amino-acid polypeptide reads, in one-letter code: Large ribosomal subunit protein uL6 (192 aa).

Belongs to the universal ribosomal protein uL6 family. Component of the large ribosomal subunit.

It is found in the cytoplasm. Component of the large ribosomal subunit. The ribosome is a large ribonucleoprotein complex responsible for the synthesis of proteins in the cell. The protein is Large ribosomal subunit protein uL6 (rpl9) of Ictalurus punctatus (Channel catfish).